Reading from the N-terminus, the 293-residue chain is Phosphatidylserine decarboxylase proenzyme (293 aa).

Residues aspartate 90, histidine 147, and serine 254 each act as charge relay system; for autoendoproteolytic cleavage activity in the active site. Serine 254 functions as the Schiff-base intermediate with substrate; via pyruvic acid; for decarboxylase activity in the catalytic mechanism. Serine 254 bears the Pyruvic acid (Ser); by autocatalysis mark.

Belongs to the phosphatidylserine decarboxylase family. PSD-B subfamily. Prokaryotic type I sub-subfamily. Heterodimer of a large membrane-associated beta subunit and a small pyruvoyl-containing alpha subunit. The cofactor is pyruvate. In terms of processing, is synthesized initially as an inactive proenzyme. Formation of the active enzyme involves a self-maturation process in which the active site pyruvoyl group is generated from an internal serine residue via an autocatalytic post-translational modification. Two non-identical subunits are generated from the proenzyme in this reaction, and the pyruvate is formed at the N-terminus of the alpha chain, which is derived from the carboxyl end of the proenzyme. The autoendoproteolytic cleavage occurs by a canonical serine protease mechanism, in which the side chain hydroxyl group of the serine supplies its oxygen atom to form the C-terminus of the beta chain, while the remainder of the serine residue undergoes an oxidative deamination to produce ammonia and the pyruvoyl prosthetic group on the alpha chain. During this reaction, the Ser that is part of the protease active site of the proenzyme becomes the pyruvoyl prosthetic group, which constitutes an essential element of the active site of the mature decarboxylase.

The protein resides in the cell membrane. It catalyses the reaction a 1,2-diacyl-sn-glycero-3-phospho-L-serine + H(+) = a 1,2-diacyl-sn-glycero-3-phosphoethanolamine + CO2. It participates in phospholipid metabolism; phosphatidylethanolamine biosynthesis; phosphatidylethanolamine from CDP-diacylglycerol: step 2/2. In terms of biological role, catalyzes the formation of phosphatidylethanolamine (PtdEtn) from phosphatidylserine (PtdSer). In Yersinia enterocolitica serotype O:8 / biotype 1B (strain NCTC 13174 / 8081), this protein is Phosphatidylserine decarboxylase proenzyme.